Consider the following 163-residue polypeptide: MPAPILPLIEAAAQWPARGALIGLDLGTKTIGVAVSDPDRRLATGVETIIHTAFKANAARLLLLAGQRNAVGFVLGLPINMDGSEGPRAQSTRAFARNFARLTDLPIGLWDERLSTSAVERELIANDVSRAKRAKVIDEHAAIFILQGALDRLTVLNAAPRTD.

Belongs to the YqgF nuclease family.

The protein localises to the cytoplasm. Could be a nuclease involved in processing of the 5'-end of pre-16S rRNA. This Rhodopseudomonas palustris (strain BisB18) protein is Putative pre-16S rRNA nuclease.